Consider the following 391-residue polypeptide: S-adenosylmethionine synthase 1 (391 aa).

A Mg(2+)-binding site is contributed by Glu9. His15 contacts ATP. Glu43 serves as a coordination point for K(+). L-methionine contacts are provided by Glu56 and Gln99. ATP-binding positions include 167–169 (DGK), 235–238 (SGRF), Asp246, 252–253 (RK), Ala269, Lys273, and Lys277. Asp246 contacts L-methionine. An L-methionine-binding site is contributed by Lys277.

The protein belongs to the AdoMet synthase family. As to quaternary structure, homotetramer. Mn(2+) is required as a cofactor. Requires Mg(2+) as cofactor. The cofactor is Co(2+). K(+) serves as cofactor.

The protein localises to the cytoplasm. It carries out the reaction L-methionine + ATP + H2O = S-adenosyl-L-methionine + phosphate + diphosphate. It functions in the pathway amino-acid biosynthesis; S-adenosyl-L-methionine biosynthesis; S-adenosyl-L-methionine from L-methionine: step 1/1. Functionally, catalyzes the formation of S-adenosylmethionine from methionine and ATP. The reaction comprises two steps that are both catalyzed by the same enzyme: formation of S-adenosylmethionine (AdoMet) and triphosphate, and subsequent hydrolysis of the triphosphate. This chain is S-adenosylmethionine synthase 1 (METK1), found in Vitis vinifera (Grape).